Reading from the N-terminus, the 668-residue chain is MSIEQTLDELKQQLNYHAYRYYVEDSPELPDAEYDRMMQELLSIESEHPELVTVDSPSQRVGGEALDGFTQIQHEIPMLSLDNAFSDEELEAFEKRMNDRLISKPVSLFCCEPKLDGLAVSLLYVNGKLVQAGTRGDGTTGENITENVRTIRCIPLTLQGEGWPTRLEVRGEVFMPKAGFEALNERALKRGEKPFANPRNAAAGSLRQLDSKITATRPLSFYAYSVGVIEGGELETSHYQRFVQLKSWGLPMCEETKQCYSLTEVKAYYKDILKRRDALKYEIDGVVIKVDDIALQEQLGFVARAPRWAIAYKFPAQEELTVLNDVEFQVGRTGAITPVAKLEPVFVGGVTVSNATLHNADEIARLGVHIGDTVIIRRAGDVIPQIVSVVEARRPTDSKAIVYPTHCPVCGSNLERVEGEAVTRCGAGLVCQAQRKEALKHFVSRKALDVDGLGDKVVEQLVDKEMVETPADLFKLSAGVLTVLERMGPKSAQNVVDALNKAKATTLPRFLYSLGIREVGEATAANLAAHFYTLEAIQVATFEQLIEVSDVGDIVAKHVLNFFAEPHNKTVIDDLQEMGIHWPEIKALDESVPQPLAGKVVVLTGTLHKLKRNEAKAALQELGAKVTGSVSKKTDILFAGEAAGSKLAKAEELGVEVMNEEQLIELLN.

NAD(+) contacts are provided by residues 31-35, 80-81, and Glu112; these read DAEYD and SL. Lys114 (N6-AMP-lysine intermediate) is an active-site residue. Residues Arg135, Glu172, Lys289, and Lys313 each coordinate NAD(+). Cys407, Cys410, Cys425, and Cys431 together coordinate Zn(2+). The region spanning 591 to 668 is the BRCT domain; the sequence is SVPQPLAGKV…NEEQLIELLN (78 aa).

The protein belongs to the NAD-dependent DNA ligase family. LigA subfamily. The cofactor is Mg(2+). It depends on Mn(2+) as a cofactor.

The catalysed reaction is NAD(+) + (deoxyribonucleotide)n-3'-hydroxyl + 5'-phospho-(deoxyribonucleotide)m = (deoxyribonucleotide)n+m + AMP + beta-nicotinamide D-nucleotide.. Functionally, DNA ligase that catalyzes the formation of phosphodiester linkages between 5'-phosphoryl and 3'-hydroxyl groups in double-stranded DNA using NAD as a coenzyme and as the energy source for the reaction. It is essential for DNA replication and repair of damaged DNA. The sequence is that of DNA ligase from Aliivibrio fischeri (strain MJ11) (Vibrio fischeri).